A 251-amino-acid polypeptide reads, in one-letter code: Hydroxyacylglutathione hydrolase (251 aa).

The Zn(2+) site is built by histidine 53, histidine 55, aspartate 57, histidine 58, histidine 110, aspartate 127, and histidine 165.

It belongs to the metallo-beta-lactamase superfamily. Glyoxalase II family. Monomer. Zn(2+) is required as a cofactor.

The enzyme catalyses an S-(2-hydroxyacyl)glutathione + H2O = a 2-hydroxy carboxylate + glutathione + H(+). It participates in secondary metabolite metabolism; methylglyoxal degradation; (R)-lactate from methylglyoxal: step 2/2. Thiolesterase that catalyzes the hydrolysis of S-D-lactoyl-glutathione to form glutathione and D-lactic acid. This chain is Hydroxyacylglutathione hydrolase, found in Blochmanniella pennsylvanica (strain BPEN).